Consider the following 320-residue polypeptide: tRNA-cytidine(32) 2-sulfurtransferase (320 aa).

A PP-loop motif motif is present at residues 54–59; sequence SGGKDS. [4Fe-4S] cluster is bound by residues cysteine 129, cysteine 132, and cysteine 220.

It belongs to the TtcA family. Homodimer. It depends on Mg(2+) as a cofactor. [4Fe-4S] cluster serves as cofactor.

Its subcellular location is the cytoplasm. The enzyme catalyses cytidine(32) in tRNA + S-sulfanyl-L-cysteinyl-[cysteine desulfurase] + AH2 + ATP = 2-thiocytidine(32) in tRNA + L-cysteinyl-[cysteine desulfurase] + A + AMP + diphosphate + H(+). The protein operates within tRNA modification. Its function is as follows. Catalyzes the ATP-dependent 2-thiolation of cytidine in position 32 of tRNA, to form 2-thiocytidine (s(2)C32). The sulfur atoms are provided by the cysteine/cysteine desulfurase (IscS) system. This Bordetella pertussis (strain Tohama I / ATCC BAA-589 / NCTC 13251) protein is tRNA-cytidine(32) 2-sulfurtransferase.